A 237-amino-acid polypeptide reads, in one-letter code: Ribonuclease PH (237 aa).

Residues R86 and 124-126 (GTR) contribute to the phosphate site.

Belongs to the RNase PH family. In terms of assembly, homohexameric ring arranged as a trimer of dimers.

The catalysed reaction is tRNA(n+1) + phosphate = tRNA(n) + a ribonucleoside 5'-diphosphate. Its function is as follows. Phosphorolytic 3'-5' exoribonuclease that plays an important role in tRNA 3'-end maturation. Removes nucleotide residues following the 3'-CCA terminus of tRNAs; can also add nucleotides to the ends of RNA molecules by using nucleoside diphosphates as substrates, but this may not be physiologically important. Probably plays a role in initiation of 16S rRNA degradation (leading to ribosome degradation) during starvation. The polypeptide is Ribonuclease PH (Methylobacterium nodulans (strain LMG 21967 / CNCM I-2342 / ORS 2060)).